Here is a 332-residue protein sequence, read N- to C-terminus: Ferredoxin--NADP reductase (332 aa).

The FAD site is built by Glu36, Gln44, Tyr49, Val91, Phe124, and Thr327.

It belongs to the ferredoxin--NADP reductase type 2 family. In terms of assembly, homodimer. It depends on FAD as a cofactor.

The catalysed reaction is 2 reduced [2Fe-2S]-[ferredoxin] + NADP(+) + H(+) = 2 oxidized [2Fe-2S]-[ferredoxin] + NADPH. In Streptococcus thermophilus (strain CNRZ 1066), this protein is Ferredoxin--NADP reductase.